The chain runs to 501 residues: Envelope glycoprotein C homolog (501 aa).

A signal peptide spans Met1–Gly27. The Virion surface portion of the chain corresponds to Ala28–Pro465. A glycan (N-linked (GlcNAc...) asparagine; by host) is linked at Asn46. A disordered region spans residues Pro53 to Ala86. A compositionally biased stretch (low complexity) spans Ser62–Ser72. 7 N-linked (GlcNAc...) asparagine; by host glycosylation sites follow: Asn91, Asn100, Asn120, Asn212, Asn354, Asn400, and Asn429. The region spanning Pro258 to Thr356 is the Ig-like domain. The helical transmembrane segment at Met466 to Tyr492 threads the bilayer. At Asn493 to Leu501 the chain is on the cytoplasmic side.

The protein belongs to the herpesviridae glycoprotein C family.

Its subcellular location is the secreted. The protein resides in the host cell membrane. May play an immunoevasive role in the pathogenesis of Marek's disease. It is a candidate for causing the early-stage immunosuppression that occurs after MDHV infection. In Gallus gallus (Chicken), this protein is Envelope glycoprotein C homolog (gC).